A 114-amino-acid chain; its full sequence is Probable acid stress chaperone HdeA (114 aa).

The N-terminal stretch at 1-26 is a signal peptide; it reads MIKALFNKNTALAAVAILALSGGAMA. Cys-46 and Cys-94 are oxidised to a cystine.

Belongs to the HdeA family.

The protein localises to the periplasm. In terms of biological role, required for optimal acid stress protection. Exhibits a chaperone-like activity only at low pH by suppressing non-specifically the aggregation of denaturated periplasmic proteins. Contributes to acid resistance. Not required for wild-type virulence in the BALB/c mouse model. This Brucella abortus (strain 2308) protein is Probable acid stress chaperone HdeA.